The sequence spans 150 residues: Soluble pyridine nucleotide transhydrogenase (150 aa).

This sequence belongs to the class-I pyridine nucleotide-disulfide oxidoreductase family. The cofactor is FAD.

The protein localises to the cytoplasm. The catalysed reaction is NAD(+) + NADPH = NADH + NADP(+). In terms of biological role, conversion of NADPH, generated by peripheral catabolic pathways, to NADH, which can enter the respiratory chain for energy generation. The polypeptide is Soluble pyridine nucleotide transhydrogenase (sthA) (Pectobacterium carotovorum subsp. carotovorum (Erwinia carotovora subsp. carotovora)).